We begin with the raw amino-acid sequence, 370 residues long: NAD-dependent histone deacetylase HST4 (370 aa).

The interval 1–27 (MKQKFVLPITPPSTAEKKPQTENRCNE) is disordered. Residues 15-27 (AEKKPQTENRCNE) are compositionally biased toward basic and acidic residues. Positions 75–370 (RHHMDRDAGF…GDCQHVTSLL (296 aa)) constitute a Deacetylase sirtuin-type domain. Residues 100–119 (GAGI…EGIF) and 184–187 (QNID) contribute to the NAD(+) site. Residue histidine 213 is the Proton acceptor of the active site. Zn(2+)-binding residues include cysteine 221, cysteine 224, cysteine 251, and cysteine 254. Residues 310–312 (GTS), 340–342 (NTS), and cysteine 363 contribute to the NAD(+) site.

Belongs to the sirtuin family. Class I subfamily. Requires Zn(2+) as cofactor.

It is found in the nucleus. It carries out the reaction N(6)-acetyl-L-lysyl-[protein] + NAD(+) + H2O = 2''-O-acetyl-ADP-D-ribose + nicotinamide + L-lysyl-[protein]. NAD-dependent histone deacetylase, which contributes together with HST3 to histone H3 'Lys-56' deacetylation, regulation of telomeric silencing, proper cell cycle progression, DNA damage control, DNA recombination, and genomic maintenance. The sequence is that of NAD-dependent histone deacetylase HST4 (HST4) from Saccharomyces cerevisiae (strain ATCC 204508 / S288c) (Baker's yeast).